Consider the following 553-residue polypeptide: Dihydroxy-acid dehydratase (553 aa).

D78 is a binding site for Mg(2+). C119 contributes to the [2Fe-2S] cluster binding site. D120 and K121 together coordinate Mg(2+). K121 carries the post-translational modification N6-carboxylysine. [2Fe-2S] cluster is bound at residue C193. Position 441 (E441) interacts with Mg(2+). S467 serves as the catalytic Proton acceptor.

Belongs to the IlvD/Edd family. Homodimer. [2Fe-2S] cluster serves as cofactor. Requires Mg(2+) as cofactor.

The enzyme catalyses (2R)-2,3-dihydroxy-3-methylbutanoate = 3-methyl-2-oxobutanoate + H2O. The catalysed reaction is (2R,3R)-2,3-dihydroxy-3-methylpentanoate = (S)-3-methyl-2-oxopentanoate + H2O. Its pathway is amino-acid biosynthesis; L-isoleucine biosynthesis; L-isoleucine from 2-oxobutanoate: step 3/4. The protein operates within amino-acid biosynthesis; L-valine biosynthesis; L-valine from pyruvate: step 3/4. Functionally, functions in the biosynthesis of branched-chain amino acids. Catalyzes the dehydration of (2R,3R)-2,3-dihydroxy-3-methylpentanoate (2,3-dihydroxy-3-methylvalerate) into 2-oxo-3-methylpentanoate (2-oxo-3-methylvalerate) and of (2R)-2,3-dihydroxy-3-methylbutanoate (2,3-dihydroxyisovalerate) into 2-oxo-3-methylbutanoate (2-oxoisovalerate), the penultimate precursor to L-isoleucine and L-valine, respectively. This chain is Dihydroxy-acid dehydratase, found in Geobacter metallireducens (strain ATCC 53774 / DSM 7210 / GS-15).